A 62-amino-acid polypeptide reads, in one-letter code: Large ribosomal subunit protein bL28 (62 aa).

It belongs to the bacterial ribosomal protein bL28 family.

This Bacillus velezensis (strain DSM 23117 / BGSC 10A6 / LMG 26770 / FZB42) (Bacillus amyloliquefaciens subsp. plantarum) protein is Large ribosomal subunit protein bL28.